The following is a 156-amino-acid chain: Arginine repressor (156 aa).

The protein belongs to the ArgR family.

It localises to the cytoplasm. The protein operates within amino-acid biosynthesis; L-arginine biosynthesis [regulation]. In terms of biological role, regulates arginine biosynthesis genes. The chain is Arginine repressor from Shewanella frigidimarina (strain NCIMB 400).